A 205-amino-acid chain; its full sequence is Proteasome subunit beta type-3 (205 aa).

Residue S2 is modified to N-acetylserine. K77 bears the N6-acetyllysine mark.

This sequence belongs to the peptidase T1B family. As to quaternary structure, the 26S proteasome consists of a 20S proteasome core and two 19S regulatory subunits. The 20S proteasome core is a barrel-shaped complex made of 28 subunits that are arranged in four stacked rings. The two outer rings are each formed by seven alpha subunits, and the two inner rings are formed by seven beta subunits. The proteolytic activity is exerted by three beta-subunits PSMB5, PSMB6 and PSMB7. In terms of tissue distribution, detected in liver (at protein level).

It is found in the cytoplasm. Its subcellular location is the nucleus. In terms of biological role, non-catalytic component of the 20S core proteasome complex involved in the proteolytic degradation of most intracellular proteins. This complex plays numerous essential roles within the cell by associating with different regulatory particles. Associated with two 19S regulatory particles, forms the 26S proteasome and thus participates in the ATP-dependent degradation of ubiquitinated proteins. The 26S proteasome plays a key role in the maintenance of protein homeostasis by removing misfolded or damaged proteins that could impair cellular functions, and by removing proteins whose functions are no longer required. Associated with the PA200 or PA28, the 20S proteasome mediates ubiquitin-independent protein degradation. This type of proteolysis is required in several pathways including spermatogenesis (20S-PA200 complex) or generation of a subset of MHC class I-presented antigenic peptides (20S-PA28 complex). The polypeptide is Proteasome subunit beta type-3 (Psmb3) (Mus musculus (Mouse)).